Here is a 500-residue protein sequence, read N- to C-terminus: Probable malate:quinone oxidoreductase (500 aa).

This sequence belongs to the MQO family. It depends on FAD as a cofactor.

The enzyme catalyses (S)-malate + a quinone = a quinol + oxaloacetate. It participates in carbohydrate metabolism; tricarboxylic acid cycle; oxaloacetate from (S)-malate (quinone route): step 1/1. The sequence is that of Probable malate:quinone oxidoreductase from Corynebacterium aurimucosum (strain ATCC 700975 / DSM 44827 / CIP 107346 / CN-1) (Corynebacterium nigricans).